We begin with the raw amino-acid sequence, 1536 residues long: Glycogen debranching enzyme (1536 aa).

Residues D535, H538, and D670 contribute to the active site.

This sequence belongs to the glycogen debranching enzyme family. In terms of assembly, interacts with IGD1.

It localises to the mitochondrion. The protein localises to the cytoplasm. It carries out the reaction Transfers a segment of a (1-&gt;4)-alpha-D-glucan to a new position in an acceptor, which may be glucose or a (1-&gt;4)-alpha-D-glucan.. The enzyme catalyses Hydrolysis of (1-&gt;6)-alpha-D-glucosidic branch linkages in glycogen phosphorylase limit dextrin.. Activity is inhibited by IGD1. Multifunctional enzyme acting as 1,4-alpha-D-glucan:1,4-alpha-D-glucan 4-alpha-D-glycosyltransferase and amylo-1,6-glucosidase in glycogen degradation. This Saccharomyces cerevisiae (strain ATCC 204508 / S288c) (Baker's yeast) protein is Glycogen debranching enzyme (GDB1).